We begin with the raw amino-acid sequence, 165 residues long: Small ribosomal subunit protein uS13 (165 aa).

The tract at residues 139–165 (GMTIGVARKKAAQPQSQQSSSQQQKSS) is disordered. A compositionally biased stretch (low complexity) spans 153–165 (QSQQSSSQQQKSS).

Belongs to the universal ribosomal protein uS13 family. In terms of assembly, part of the 30S ribosomal subunit. Forms a loose heterodimer with protein S19. Forms two bridges to the 50S subunit in the 70S ribosome.

Functionally, located at the top of the head of the 30S subunit, it contacts several helices of the 16S rRNA. In the 70S ribosome it contacts the 23S rRNA (bridge B1a) and protein L5 of the 50S subunit (bridge B1b), connecting the 2 subunits; these bridges are implicated in subunit movement. The protein is Small ribosomal subunit protein uS13 of Saccharolobus solfataricus (strain ATCC 35092 / DSM 1617 / JCM 11322 / P2) (Sulfolobus solfataricus).